Here is a 587-residue protein sequence, read N- to C-terminus: ATP-dependent zinc metalloprotease FtsH 2 (587 aa).

Topologically, residues 1–12 are cytoplasmic; that stretch reads MSSDRTREVTKR. The chain crosses the membrane as a helical span at residues 13–33; the sequence is ILMVLFGLWLLQFFFLPPLTT. Over 34-102 the chain is Extracellular; that stretch reads RPTELSYSAF…EQRYEVTRTP (69 aa). Residues 103–123 traverse the membrane as a helical segment; the sequence is WWVTLLPTVLWLAVMVGLFAW. Residues 124–587 lie on the Cytoplasmic side of the membrane; sequence AQKRQAGAFG…GDDVRRILSA (464 aa). Residue 192–199 coordinates ATP; that stretch reads GPPGTGKT. His-416 provides a ligand contact to Zn(2+). Glu-417 is a catalytic residue. Zn(2+) contacts are provided by His-420 and Asp-492.

This sequence in the central section; belongs to the AAA ATPase family. In the C-terminal section; belongs to the peptidase M41 family. Homohexamer. Zn(2+) is required as a cofactor.

Its subcellular location is the cell membrane. Functionally, acts as a processive, ATP-dependent zinc metallopeptidase for both cytoplasmic and membrane proteins. Plays a role in the quality control of integral membrane proteins. This chain is ATP-dependent zinc metalloprotease FtsH 2, found in Symbiobacterium thermophilum (strain DSM 24528 / JCM 14929 / IAM 14863 / T).